A 601-amino-acid chain; its full sequence is Probable translation initiation factor IF-2 (601 aa).

The 216-residue stretch at 14-229 folds into the tr-type G domain; that stretch reads LRTPIVAVLG…VMMGLSQRYM (216 aa). The segment at 23–30 is G1; the sequence is GHVDHGKT. 23–30 lines the GTP pocket; sequence GHVDHGKT. A G2 region spans residues 48–52; sequence AITQH. The segment at 85-88 is G3; sequence DTPG. Residues 85–89 and 139–142 each bind GTP; these read DTPGH and NKID. A G4 region spans residues 139 to 142; sequence NKID. The G5 stretch occupies residues 207–209; that stretch reads SAE.

It belongs to the TRAFAC class translation factor GTPase superfamily. Classic translation factor GTPase family. IF-2 subfamily.

Function in general translation initiation by promoting the binding of the formylmethionine-tRNA to ribosomes. Seems to function along with eIF-2. The polypeptide is Probable translation initiation factor IF-2 (Haloarcula marismortui (strain ATCC 43049 / DSM 3752 / JCM 8966 / VKM B-1809) (Halobacterium marismortui)).